The sequence spans 180 residues: Tubulin polymerization-promoting protein homolog (180 aa).

2 stretches are compositionally biased toward basic and acidic residues: residues 136 to 158 (TGAH…RADT) and 169 to 180 (KNKDSYDKTHGK). Positions 136–180 (TGAHKERFDAEGKGKGKSGRADTTENTGYVGAYKNKDSYDKTHGK) are disordered.

Belongs to the TPPP family.

Regulator of microtubule dynamics. The sequence is that of Tubulin polymerization-promoting protein homolog from Caenorhabditis elegans.